Here is a 156-residue protein sequence, read N- to C-terminus: SsrA-binding protein (156 aa).

Belongs to the SmpB family.

The protein localises to the cytoplasm. Required for rescue of stalled ribosomes mediated by trans-translation. Binds to transfer-messenger RNA (tmRNA), required for stable association of tmRNA with ribosomes. tmRNA and SmpB together mimic tRNA shape, replacing the anticodon stem-loop with SmpB. tmRNA is encoded by the ssrA gene; the 2 termini fold to resemble tRNA(Ala) and it encodes a 'tag peptide', a short internal open reading frame. During trans-translation Ala-aminoacylated tmRNA acts like a tRNA, entering the A-site of stalled ribosomes, displacing the stalled mRNA. The ribosome then switches to translate the ORF on the tmRNA; the nascent peptide is terminated with the 'tag peptide' encoded by the tmRNA and targeted for degradation. The ribosome is freed to recommence translation, which seems to be the essential function of trans-translation. The sequence is that of SsrA-binding protein from Thermoanaerobacter pseudethanolicus (strain ATCC 33223 / 39E) (Clostridium thermohydrosulfuricum).